We begin with the raw amino-acid sequence, 520 residues long: MTKKLSPLEKQARRPASRACSFCHSKHLQCSNNRPCKNCVKRNIADQCRDVERKRANYMTLAAKNKQGSPNTVSLESSSSPFSPLHKGHINSQSSQPLDPSSGRVNTDFFSQSETTVPSPWPMDLESKERTNAILNTTDDVLNKILYDEQASKVPSAQASEMTPSNSSIDGVFNSNYLNQEYLMLGDIILNSKPASPTPSSTSEYQTIPPNEMMGTVDYNEVYRDTKSKKLKESRPFISLGFSNPPDLDNRKLPGEINIANEIMDPSKRAQVTTTNDYVSPLVTRHIYQSVQDIYANKIINYEYPTSYHALTFFLKKRFSGTSLPPEQKQQKRNNLLIILKLIASYRPTFISAHKSLLKPYDLMFLEMTFQRSLIDYEKLSHLNSSPTIIWRRTGEIVSISDEILSLLGYSLNSILSKRTFIMELMYDDESIINYFKLFKSVAVGNLHSSIITRCKLMKNPDRDRSTRASTTGTEQQLTEADYIEFCAVWTVKRDLFDLPMLIMGQFLPVLPAGDGVRRY.

The zn(2)-C6 fungal-type DNA-binding region spans 20-48; it reads CSFCHSKHLQCSNNRPCKNCVKRNIADQC. Disordered regions lie at residues 63 to 104 and 194 to 213; these read AKNK…SSGR and PASP…PNEM. Positions 74-85 are enriched in low complexity; the sequence is SLESSSSPFSPL. Polar residues predominate over residues 90 to 104; the sequence is INSQSSQPLDPSSGR. The region spanning 376–445 is the PAS domain; the sequence is DYEKLSHLNS…FKLFKSVAVG (70 aa).

This sequence belongs to the ERT1/acuK family.

The protein resides in the nucleus. In terms of biological role, transcription factor which regulates nonfermentable carbon utilization. This is Glucose starvation modulator protein 1 (GSM1) from Meyerozyma guilliermondii (strain ATCC 6260 / CBS 566 / DSM 6381 / JCM 1539 / NBRC 10279 / NRRL Y-324) (Yeast).